A 90-amino-acid polypeptide reads, in one-letter code: YcgL domain-containing protein YpsIP31758_2009 (90 aa).

In terms of domain architecture, YcgL spans 1 to 85 (MLCAIYRSPK…PPESLLKMHL (85 aa)).

This chain is YcgL domain-containing protein YpsIP31758_2009, found in Yersinia pseudotuberculosis serotype O:1b (strain IP 31758).